The primary structure comprises 451 residues: Glycine--tRNA ligase (451 aa).

The substrate site is built by arginine 99 and glutamate 168. ATP contacts are provided by residues 200 to 202 (RNE), 210 to 215 (FRTREF), 284 to 285 (EL), and 328 to 331 (GLDR). 215–219 (FEQME) provides a ligand contact to substrate. 324-328 (EPSVG) lines the substrate pocket.

It belongs to the class-II aminoacyl-tRNA synthetase family. In terms of assembly, homodimer.

The protein localises to the cytoplasm. It carries out the reaction tRNA(Gly) + glycine + ATP = glycyl-tRNA(Gly) + AMP + diphosphate. In terms of biological role, catalyzes the attachment of glycine to tRNA(Gly). This is Glycine--tRNA ligase from Mycoplasmopsis synoviae (strain 53) (Mycoplasma synoviae).